The sequence spans 384 residues: Beta-ureidopropionase (384 aa).

Residues 72–344 (VHVGLVQNRI…DGLLVAKLDL (273 aa)) form the CN hydrolase domain. Glu119 (proton acceptor) is an active-site residue. Lys196 (proton donor) is an active-site residue. Cys233 (nucleophile) is an active-site residue. Ser378 is subject to Phosphoserine.

This sequence belongs to the carbon-nitrogen hydrolase superfamily. BUP family. As to quaternary structure, homodimer, homotetramer, homooctamer; can also form higher homooligomers. As to expression, detected in liver (at protein level).

It localises to the cytoplasm. It catalyses the reaction 3-(carbamoylamino)propanoate + H2O + 2 H(+) = beta-alanine + NH4(+) + CO2. The enzyme catalyses 3-(carbamoylamino)-2-methylpropanoate + H2O + 2 H(+) = (R)-3-amino-2-methylpropanoate + NH4(+) + CO2. Its pathway is amino-acid biosynthesis; beta-alanine biosynthesis. Strongly inhibited by 50 mM Zn(2+). Not inhibited by EDTA. Competitively inhibited by beta-alanine, 5-aminolevulinic acid (ALA), beta-aminoisobutyrate and 4-ureidobutyrate. Catalyzes a late step in pyrimidine degradation. Converts N-carbamoyl-beta-alanine (3-ureidopropanoate) into beta-alanine, ammonia and carbon dioxide. Likewise, converts N-carbamoyl-beta-aminoisobutyrate (3-ureidoisobutyrate) into beta-aminoisobutyrate, ammonia and carbon dioxide. The polypeptide is Beta-ureidopropionase (UPB1) (Homo sapiens (Human)).